The primary structure comprises 66 residues: Antimicrobial peptide Eval967 (66 aa).

The first 22 residues, 1-22, serve as a signal peptide directing secretion; the sequence is MKFSALLPVFFLLLAVIDYCQA. At leucine 36 the chain carries Leucine amide. Residues 37-66 constitute a propeptide that is removed on maturation; sequence GKRDVKTQKYVDIKRRDLDLDDMLSKLFED.

The protein belongs to the non-disulfide-bridged peptide (NDBP) superfamily. Short antimicrobial peptide (group 4) family. As to expression, expressed by the venom gland.

The protein localises to the secreted. Its function is as follows. Probable antimicrobial peptide. Has no inhibitory activity against herpes simplex virus type 1 (HSV-1). This is Antimicrobial peptide Eval967 from Euscorpiops validus (Scorpion).